The sequence spans 593 residues: Dolichyl-phosphooligosaccharide-protein glycotransferase 2 (593 aa).

At Met-1–Ser-12 the chain is on the cytoplasmic side. Residues Leu-13–Phe-33 form a helical membrane-spanning segment. Residues Asp-34–Glu-98 lie on the Extracellular side of the membrane. Positions Gly-41–Asp-43 match the DXD motif 1 motif. Mn(2+) is bound at residue Asp-43. Residues Ile-99 to Ile-119 form a helical membrane-spanning segment. Topologically, residues Ser-120–Lys-128 are cytoplasmic. A helical transmembrane segment spans residues Phe-129 to Leu-149. At Gly-150–His-154 the chain is on the extracellular side. Asp-153 serves as a coordination point for Mn(2+). Positions Asp-153–His-155 match the DXD motif 2 motif. A glycophospholipid is bound at residue His-154. His-155 is a binding site for Mn(2+). Residues His-155–Leu-175 traverse the membrane as a helical segment. Residues Lys-176 to Gly-180 are Cytoplasmic-facing. The chain crosses the membrane as a helical span at residues Ile-181–Ala-201. The Extracellular portion of the chain corresponds to Val-202–Gln-229. Residues Asn-230–Val-250 form a helical membrane-spanning segment. Residues Lys-251–Leu-265 are Cytoplasmic-facing. Residues Cys-266 to Val-286 form a helical membrane-spanning segment. Topologically, residues Lys-287–Gln-310 are extracellular. The short motif at Thr-302–Glu-305 is the TIXE motif element. A helical membrane pass occupies residues Ile-311–Phe-331. Met-332 is a topological domain (cytoplasmic). Residues Leu-333–Leu-353 traverse the membrane as a helical segment. A topological domain (extracellular) is located at residue Arg-354. An a glycophospholipid-binding site is contributed by Arg-354. A helical transmembrane segment spans residues Phe-355–Leu-375. Over Glu-376–Ala-411 the chain is Cytoplasmic. A helical membrane pass occupies residues Thr-412 to Val-432. Over Glu-433–Lys-593 the chain is Extracellular. An interacts with target acceptor peptide in protein substrate region spans residues Trp-468–Asp-470. The WWDYG motif motif lies at Trp-468–Gly-472. The short motif at Glu-524–Ile-539 is the DKi motif element.

It belongs to the STT3 family. Requires Mn(2+) as cofactor. The cofactor is Mg(2+). Zn(2+) serves as cofactor.

It is found in the cell membrane. It catalyses the reaction an archaeal dolichyl phosphooligosaccharide + [protein]-L-asparagine = an archaeal dolichyl phosphate + a glycoprotein with the oligosaccharide chain attached by N-beta-D-glycosyl linkage to a protein L-asparagine.. It participates in protein modification; protein glycosylation. Oligosaccharyl transferase (OST) that catalyzes the initial transfer of a defined glycan (a GalNAc-linked heptasaccharide composed of 4 Hex, 3 dHex and a sulfate for A.fulgidus AglB-S) from the lipid carrier dolichol-monophosphate to an asparagine residue within an Asn-X-Ser/Thr consensus motif in nascent polypeptide chains, the first step in protein N-glycosylation. This Archaeoglobus fulgidus (strain ATCC 49558 / DSM 4304 / JCM 9628 / NBRC 100126 / VC-16) protein is Dolichyl-phosphooligosaccharide-protein glycotransferase 2 (aglB2).